A 395-amino-acid polypeptide reads, in one-letter code: Scyllo-inosose 3-dehydrogenase (395 aa).

Residue C66 coordinates Zn(2+). Catalysis depends on charge relay system residues S68 and H71. The Zn(2+) site is built by H95, E96, C131, C134, C137, C145, and E193. I223, E243, and R248 together coordinate NAD(+).

It belongs to the zinc-containing alcohol dehydrogenase family. As to quaternary structure, homodimer. Requires Zn(2+) as cofactor.

The enzyme catalyses scyllo-inosose + NAD(+) = 3-dehydro-scyllo-inosose + NADH + H(+). It functions in the pathway polyol metabolism; myo-inositol metabolism. In terms of biological role, catalyzes the NAD(+)-dependent oxidation of scyllo-inosose (2-keto-myo-inositol) to 3-dehydro-scyllo-inosose (diketo-inositol), and thus probably functions in a myo-inositol degradation pathway together with IolG, IolN and IolO. Has no activity on myo-inositol, D-chiro-inositol and 1-keto-D-chiro-inositol. This chain is Scyllo-inosose 3-dehydrogenase, found in Thermotoga maritima (strain ATCC 43589 / DSM 3109 / JCM 10099 / NBRC 100826 / MSB8).